Consider the following 667-residue polypeptide: Cyclin-dependent kinase 17 (667 aa).

Disordered regions lie at residues 1-70 and 85-184; these read MTAY…SSLN and DSEY…LRKM. 2 stretches are compositionally biased toward acidic residues: residues 99-111 and 119-144; these read EDFD…EFED and DEDD…ITPE. The segment covering 151–164 has biased composition (polar residues); it reads TGVTTQTTPPSNNT. The region spanning 328–609 is the Protein kinase domain; sequence YEKLDKLGEG…AAEAVKHPFL (282 aa). ATP contacts are provided by residues 334-342 and lysine 357; that span reads LGEGTYATV. Residue aspartate 449 is the Proton acceptor of the active site. Residues asparagine 454 and aspartate 467 each coordinate Mg(2+). Positions 642–667 are disordered; that stretch reads HHHSSRRHHRGTLVKDKYRMHSSHHT. Residues 644–653 show a composition bias toward basic residues; it reads HSSRRHHRGT.

It belongs to the protein kinase superfamily. CMGC Ser/Thr protein kinase family. CDC2/CDKX subfamily. Interacts with cyy-1; the interaction is required to activate pct-1. Mg(2+) serves as cofactor.

Its subcellular location is the cytoplasm. It localises to the cell projection. It is found in the dendrite. The protein localises to the axon. The enzyme catalyses L-seryl-[protein] + ATP = O-phospho-L-seryl-[protein] + ADP + H(+). It catalyses the reaction L-threonyl-[protein] + ATP = O-phospho-L-threonyl-[protein] + ADP + H(+). Serine/threonine-protein kinase, which, in association with cyy-1, regulates the trafficking of synaptic vesicles in the DA9 motor neuron and probably also in the DD motor neurons and in RIA interneurons. Functionally, sufficient for synaptic vesicle trafficking in the DA9 motor neuron. In Caenorhabditis elegans, this protein is Cyclin-dependent kinase 17.